We begin with the raw amino-acid sequence, 853 residues long: Aminotransferase PigE (853 aa).

503–504 (GT) contributes to the pyridoxal 5'-phosphate binding site. N6-(pyridoxal phosphate)lysine is present on lysine 645. Threonine 680 is a binding site for pyridoxal 5'-phosphate.

Belongs to the class-III pyridoxal-phosphate-dependent aminotransferase family. In terms of assembly, homodimer. Requires pyridoxal 5'-phosphate as cofactor.

It participates in antibiotic biosynthesis; prodigiosin biosynthesis. Involved in the biosynthesis of 2-methyl-3-n-amyl-pyrrole (MAP), one of the terminal products involved in the biosynthesis of the red antibiotic prodigiosin (Pig). Catalyzes the transamination to the aldehyde group of 3-acetyloctanal, resulting in an aminoketone, which spontaneously cyclizes to yield the dihydro form of MAP (H2MAP). In Serratia sp. (strain ATCC 39006) (Prodigiosinella confusarubida), this protein is Aminotransferase PigE.